The sequence spans 236 residues: 7-cyano-7-deazaguanine synthase 2 (236 aa).

11–21 is an ATP binding site; the sequence is FSGGQDSATCL. Residues Cys-199, Cys-214, Cys-217, and Cys-220 each coordinate Zn(2+).

Belongs to the QueC family. Requires Zn(2+) as cofactor.

It catalyses the reaction 7-carboxy-7-deazaguanine + NH4(+) + ATP = 7-cyano-7-deazaguanine + ADP + phosphate + H2O + H(+). It participates in purine metabolism; 7-cyano-7-deazaguanine biosynthesis. In terms of biological role, catalyzes the ATP-dependent conversion of 7-carboxy-7-deazaguanine (CDG) to 7-cyano-7-deazaguanine (preQ(0)). In Sphingopyxis alaskensis (strain DSM 13593 / LMG 18877 / RB2256) (Sphingomonas alaskensis), this protein is 7-cyano-7-deazaguanine synthase 2.